The primary structure comprises 127 residues: Small ribosomal subunit protein uS12 (127 aa).

Position 89 is a 3-methylthioaspartic acid (Asp89).

This sequence belongs to the universal ribosomal protein uS12 family. In terms of assembly, part of the 30S ribosomal subunit. Contacts proteins S8 and S17. May interact with IF1 in the 30S initiation complex.

With S4 and S5 plays an important role in translational accuracy. In terms of biological role, interacts with and stabilizes bases of the 16S rRNA that are involved in tRNA selection in the A site and with the mRNA backbone. Located at the interface of the 30S and 50S subunits, it traverses the body of the 30S subunit contacting proteins on the other side and probably holding the rRNA structure together. The combined cluster of proteins S8, S12 and S17 appears to hold together the shoulder and platform of the 30S subunit. The protein is Small ribosomal subunit protein uS12 of Campylobacter lari (strain RM2100 / D67 / ATCC BAA-1060).